The sequence spans 471 residues: 3-isopropylmalate dehydratase large subunit (471 aa).

Residues Cys-351, Cys-414, and Cys-417 each coordinate [4Fe-4S] cluster.

It belongs to the aconitase/IPM isomerase family. LeuC type 1 subfamily. Heterodimer of LeuC and LeuD. [4Fe-4S] cluster serves as cofactor.

The catalysed reaction is (2R,3S)-3-isopropylmalate = (2S)-2-isopropylmalate. It participates in amino-acid biosynthesis; L-leucine biosynthesis; L-leucine from 3-methyl-2-oxobutanoate: step 2/4. Its function is as follows. Catalyzes the isomerization between 2-isopropylmalate and 3-isopropylmalate, via the formation of 2-isopropylmaleate. The polypeptide is 3-isopropylmalate dehydratase large subunit (Colwellia psychrerythraea (strain 34H / ATCC BAA-681) (Vibrio psychroerythus)).